Consider the following 259-residue polypeptide: uncharacterized protein (259 aa).

In terms of domain architecture, ABC transporter spans 4-243 (INLKNINLTR…KILTDFYQEK (240 aa)). 36-43 (GLNGSGKS) serves as a coordination point for ATP.

The protein belongs to the ABC transporter superfamily.

This is an uncharacterized protein from Lactococcus lactis subsp. lactis (strain IL1403) (Streptococcus lactis).